Reading from the N-terminus, the 235-residue chain is Futalosine hydrolase (235 aa).

It belongs to the PNP/UDP phosphorylase family. Futalosine hydrolase subfamily.

The enzyme catalyses futalosine + H2O = dehypoxanthine futalosine + hypoxanthine. It functions in the pathway quinol/quinone metabolism; menaquinone biosynthesis. Functionally, catalyzes the hydrolysis of futalosine (FL) to dehypoxanthine futalosine (DHFL) and hypoxanthine, a step in the biosynthesis of menaquinone (MK, vitamin K2). Does not accept aminodeoxyfutalosine (AFL) as a substrate. The polypeptide is Futalosine hydrolase (Streptomyces coelicolor (strain ATCC BAA-471 / A3(2) / M145)).